Consider the following 377-residue polypeptide: dTDP-fucopyranose mutase (377 aa).

Residues S12, 31–32 (DD), N39, 58–59 (HI), R348, and 355–360 (LDMDVC) contribute to the FAD site.

This sequence belongs to the UDP-galactopyranose/dTDP-fucopyranose mutase family. The cofactor is FAD.

The catalysed reaction is dTDP-alpha-D-fucose = dTDP-alpha-D-fucofuranose. It functions in the pathway bacterial outer membrane biogenesis; LPS O-antigen biosynthesis. With respect to regulation, inhibited by Cu(2+), while other divalent cations such as Ca(2+), Co(2+), Fe(2+) and Mg(2+) have no obvious effects on enzyme activity. Functionally, catalyzes the conversion of dTDP-alpha-D-fucopyranose to dTDP-alpha-D-fucofuranose. This is a step in the biosynthesis of D-fucofuranose, a component of E.coli O52 O antigen. The polypeptide is dTDP-fucopyranose mutase (fcf2) (Escherichia coli).